A 383-amino-acid chain; its full sequence is V-type proton ATPase subunit C 1-A (383 aa).

Position 2 is an N-acetylthreonine (Thr-2).

Belongs to the V-ATPase C subunit family. In terms of assembly, V-ATPase is a heteromultimeric enzyme made up of two complexes: the ATP-hydrolytic V1 complex and the proton translocation V0 complex. The V1 complex consists of three catalytic AB heterodimers that form a heterohexamer, three peripheral stalks each consisting of EG heterodimers, one central rotor including subunits D and F, and the regulatory subunits C and H. The proton translocation complex V0 consists of the proton transport subunit a, a ring of proteolipid subunits c9c'', rotary subunit d, subunits e and f, and two accessory subunits.

Its function is as follows. Subunit of the V1 complex of vacuolar(H+)-ATPase (V-ATPase), a multisubunit enzyme composed of a peripheral complex (V1) that hydrolyzes ATP and a membrane integral complex (V0) that translocates protons. V-ATPase is responsible for acidifying and maintaining the pH of intracellular compartments and in some cell types, is targeted to the plasma membrane, where it is responsible for acidifying the extracellular environment. Subunit C is necessary for the assembly of the catalytic sector of the enzyme and is likely to have a specific function in its catalytic activity. In Danio rerio (Zebrafish), this protein is V-type proton ATPase subunit C 1-A (atp6v1c1a).